Reading from the N-terminus, the 329-residue chain is Aspartate--ammonia ligase (329 aa).

This sequence belongs to the class-II aminoacyl-tRNA synthetase family. AsnA subfamily.

The protein localises to the cytoplasm. The enzyme catalyses L-aspartate + NH4(+) + ATP = L-asparagine + AMP + diphosphate + H(+). It functions in the pathway amino-acid biosynthesis; L-asparagine biosynthesis; L-asparagine from L-aspartate (ammonia route): step 1/1. The protein is Aspartate--ammonia ligase of Ureaplasma urealyticum serovar 10 (strain ATCC 33699 / Western).